Consider the following 207-residue polypeptide: Dephospho-CoA kinase (207 aa).

One can recognise a DPCK domain in the interval 8–207 (AIALTGSIGS…LPCVDCVQSS (200 aa)). 16 to 21 (GSGKST) lines the ATP pocket.

This sequence belongs to the CoaE family.

It localises to the cytoplasm. It carries out the reaction 3'-dephospho-CoA + ATP = ADP + CoA + H(+). It participates in cofactor biosynthesis; coenzyme A biosynthesis; CoA from (R)-pantothenate: step 5/5. Catalyzes the phosphorylation of the 3'-hydroxyl group of dephosphocoenzyme A to form coenzyme A. In Helicobacter hepaticus (strain ATCC 51449 / 3B1), this protein is Dephospho-CoA kinase.